We begin with the raw amino-acid sequence, 509 residues long: Methylthioalkylmalate synthase 1-1, chloroplastic (509 aa).

Residues 1–55 (MSFSPTYSIVMASPLLTSSQMIPTTGSTVGFRSILPFGSLRLTRPYKKTSLFISY) constitute a chloroplast transit peptide. The Pyruvate carboxyltransferase domain maps to 91 to 365 (VRVYDTTLRD…YTRIDTRQIM (275 aa)). The Mn(2+) site is built by Asp-100, His-298, and His-300.

It belongs to the alpha-IPM synthase/homocitrate synthase family. In terms of assembly, monomer. It depends on Mn(2+) as a cofactor. Requires Co(2+) as cofactor.

It is found in the plastid. It localises to the chloroplast. It carries out the reaction 4-methylsulfanyl-2-oxobutanoate + acetyl-CoA + H2O = 2-(2-methylsulfanyl)ethylmalate + CoA + H(+). The protein operates within secondary metabolite biosynthesis. Inhibited by EDTA, Cu(2+) and Zn(2+). Functionally, determines the side chain length of aliphatic glucosinolate structures. Involved in the biosynthesis of glucosinolate derivative natural products such as 6-(methylsulfinyl)hexylisothiocyanate (6-MSITC), a compound found in wasabi with diverse health-promoting properties. Catalyzes the conversion of 4-methylsulfanyl-2-oxobutanoate (4-MTOB) into 2-(2-methylsulfanyl)ethylmalate (2-(2-MT)EM). In Eutrema japonicum (Wasabi plant), this protein is Methylthioalkylmalate synthase 1-1, chloroplastic.